The chain runs to 1142 residues: Enamelin (1142 aa).

An N-terminal signal peptide occupies residues 1 to 39; sequence MLVLRCRLGTSFPKLDNLVPKGKMKILLVFLGLLGNSVA. Disordered regions lie at residues 88 to 193, 214 to 326, 398 to 671, 874 to 955, 1020 to 1048, and 1062 to 1092; these read QYQM…ISNE, YYSE…PNIR, PANL…QNRW, CCAG…LRRN, VIGTPDEGSNPEGIQSQVQENESERQQQR, and LAKHHSSTTGTPSSDGRQSPFDGDSITPTEN. Over residues 103–114 the composition is skewed to basic residues; sequence HPRKSSAPKRHN. Residues N114 and N126 are each glycosylated (N-linked (GlcNAc...) asparagine). Positions 117 to 128 are enriched in polar residues; the sequence is DQTQETQKPNQT. Positions 140–162 are enriched in low complexity; the sequence is KQPSHNQPQPEEEAQPPQAFPPF. Over residues 170–186 the composition is skewed to pro residues; that stretch reads QQPPWQIPQRLPPPGYG. Phosphoserine occurs at positions 191 and 216. Positions 223 to 234 are enriched in basic and acidic residues; sequence DFEKPKEEDPPK. Over residues 240–285 the composition is skewed to polar residues; that stretch reads TEPTANSTVTETNSTQPNPKGSQGGNDTSPTGNSTPGLNTGNNPPA. N245, N252, N265, and N296 each carry an N-linked (GlcNAc...) asparagine glycan. The segment covering 429–442 has biased composition (basic and acidic residues); it reads RNEKIQNPKEKPLG. Composition is skewed to polar residues over residues 452 to 470, 507 to 516, and 531 to 544; these read KNPTSPWRNSQQYEVNKSN, SDGQTQSQNL, and SETNQSELKHSSYQ. The N-linked (GlcNAc...) asparagine glycan is linked to N467. N-linked (GlcNAc...) asparagine glycosylation is present at N534. Over residues 556-588 the composition is skewed to basic and acidic residues; sequence AKEHFPAGRNTWDHQEISPPFKEDPGRQEEHLP. A compositionally biased stretch (acidic residues) spans 652-661; sequence NEEDPVDPTG. The span at 924–934 shows a compositional bias: polar residues; the sequence is SPTSILPGQRN. N934 carries N-linked (GlcNAc...) asparagine glycosylation. The span at 935 to 951 shows a compositional bias: basic and acidic residues; that stretch reads SSEKRESQNPFRDDVST. A glycan (N-linked (GlcNAc...) asparagine) is linked at N1040. Residues 1068-1078 are compositionally biased toward polar residues; sequence STTGTPSSDGR.

In terms of processing, phosphorylated by FAM20C in vitro. As to expression, expressed in tooth particularly in odontoblast, ameloblast and cementoblast.

Its subcellular location is the secreted. It localises to the extracellular space. It is found in the extracellular matrix. In terms of biological role, involved in the mineralization and structural organization of enamel. Involved in the extension of enamel during the secretory stage of dental enamel formation. This Homo sapiens (Human) protein is Enamelin (ENAM).